The sequence spans 435 residues: MKRRASDRGAGETSANAKALGTGIAGNNAKRAGPFVLGPRLGNSPVPSIVQCLARKDGTDDFYQLKILTLEERGEQGIESQEERQGKMLLHTEYSLLSLLHTQDGVVHHHGLFQDRTCEAVEDTESGRMVKKMKKRICLVLDCLCAHDFSDKTADLINLQHYVIKEKRLSERETVVIFYDVVRVVEALHQKNIVHRDLKLGNMVLNKRTHRITITNFCLGKHLVSEGDLLKDQRGSPAYISPDVLSGRPYRGKPSDMWALGVVLFTMLYGQFPFYDSIPQELFRKIKAAEYTIPEDGRVSENTVCLIRKLLVLDPQQRLAAADVLEALSAIIASWQSLSSLSGPLQVVPDIDDQMSSSDSSQEAKVTEECSQYEFENYMRQQLLLAEEKSSIHEARAWVPKRQFGSMPPVRRLGHDAQPMTSLDTAILAQRYLRK.

Positions 35-332 (FVLGPRLGNS…DVLEALSAII (298 aa)) constitute a Protein kinase domain. Residues 41 to 49 (LGNSPVPSI) and lysine 66 each bind ATP. Catalysis depends on aspartate 197, which acts as the Proton acceptor.

It belongs to the protein kinase superfamily. CAMK Ser/Thr protein kinase family.

Its subcellular location is the nucleus. It is found in the cytoplasm. The enzyme catalyses L-seryl-[protein] + ATP = O-phospho-L-seryl-[protein] + ADP + H(+). The catalysed reaction is L-threonyl-[protein] + ATP = O-phospho-L-threonyl-[protein] + ADP + H(+). May be a negative regulator of NF-kappa-B and p53-mediated gene transcription. The sequence is that of Serine/threonine-protein kinase 40 (Stk40) from Mus musculus (Mouse).